The chain runs to 316 residues: Nucleoside diphosphate-linked moiety X motif 6 (316 aa).

One can recognise a Nudix hydrolase domain in the interval 141–273; that stretch reads SHQVGVAGAV…TSRVARLLLY (133 aa). The Nudix box signature appears at 176-197; it reads GLSEPEEDIGDTAVREVFEETG.

This sequence belongs to the Nudix hydrolase family. Monomer and homodimer. As to expression, detected in liver, kidney and esophagus (at protein level). Ubiquitous.

The protein resides in the cytoplasm. Its subcellular location is the nucleus. It localises to the mitochondrion. Its function is as follows. May contribute to the regulation of cell proliferation. In Homo sapiens (Human), this protein is Nucleoside diphosphate-linked moiety X motif 6 (NUDT6).